A 246-amino-acid polypeptide reads, in one-letter code: Dolichol-phosphate mannosyltransferase subunit 1 (246 aa).

GDP-alpha-D-mannose contacts are provided by proline 20, tyrosine 22, glutamate 24, valine 49, aspartate 51, aspartate 104, alanine 105, aspartate 106, arginine 133, arginine 220, and lysine 226. Aspartate 106 serves as a coordination point for Mg(2+). Mn(2+) is bound at residue aspartate 106.

Belongs to the glycosyltransferase 2 family. Component of the dolichol-phosphate mannose (DPM) synthase complex composed of DPMS1, DPMS2 and DPMS3; in the complex interacts directly with DPMS3. Requires Mg(2+) as cofactor. The cofactor is Mn(2+). Ca(2+) is required as a cofactor.

Its subcellular location is the endoplasmic reticulum membrane. It catalyses the reaction a di-trans,poly-cis-dolichyl phosphate + GDP-alpha-D-mannose = a di-trans,poly-cis-dolichyl beta-D-mannosyl phosphate + GDP. Its pathway is protein modification; protein glycosylation. Functionally, transfers mannose from GDP-mannose to dolichol monophosphate to form dolichol phosphate mannose (Dol-P-Man) which is the mannosyl donor in pathways leading to N-glycosylation, glycosyl phosphatidylinositol membrane anchoring, and O-mannosylation of proteins; catalytic subunit of the dolichol-phosphate mannose (DPM) synthase complex. Plays a role in plant development and physiology, sensitivity to ammonium stress and endoplasmic reticulum stress response. The chain is Dolichol-phosphate mannosyltransferase subunit 1 from Arabidopsis thaliana (Mouse-ear cress).